Consider the following 482-residue polypeptide: Probable 2-carboxy-D-arabinitol-1-phosphatase (482 aa).

Residues 1 to 34 constitute a chloroplast transit peptide; sequence MISLPLTTPILPSRCLLHKTRRQNSTRRRLLIRS. The active-site Tele-phosphohistidine intermediate is the His55. Glu129 serves as the catalytic Proton donor/acceptor.

It belongs to the phosphoglycerate mutase family.

It localises to the plastid. The protein resides in the chloroplast stroma. It carries out the reaction 2-carboxy-D-arabinitol 1-phosphate + H2O = 2-carboxy-D-arabinitol + phosphate. In terms of biological role, phosphoglycerate mutase-like protein lacking PGM activity, but having 2-carboxy-D-arabinitol 1-phosphate (CA1P) phosphatase activity. Prevents the accumulation of D-glycero-2,3-pentodiulose-1,5-bisphosphate (PDBP) a potent inhibitor of ribulose-1,5-bisphosphate carboxylase (RuBisCO). PDBP is produced during the oxidation of ribulose-1,5-bisphosphate, the substrate of RuBisCO. The protein is Probable 2-carboxy-D-arabinitol-1-phosphatase of Arabidopsis thaliana (Mouse-ear cress).